The sequence spans 205 residues: LexA repressor (205 aa).

The segment at residues 29–49 (IRDICKATGLRSSSTVYNYLN) is a DNA-binding region (H-T-H motif). Residues serine 128 and lysine 165 each act as for autocatalytic cleavage activity in the active site.

The protein belongs to the peptidase S24 family. In terms of assembly, homodimer.

The enzyme catalyses Hydrolysis of Ala-|-Gly bond in repressor LexA.. Functionally, represses a number of genes involved in the response to DNA damage (SOS response), including recA and lexA. In the presence of single-stranded DNA, RecA interacts with LexA causing an autocatalytic cleavage which disrupts the DNA-binding part of LexA, leading to derepression of the SOS regulon and eventually DNA repair. This Moorella thermoacetica (strain ATCC 39073 / JCM 9320) protein is LexA repressor.